The primary structure comprises 138 residues: Cysteine desulfuration protein SufE (138 aa).

The active-site Cysteine persulfide intermediate is cysteine 51.

This sequence belongs to the SufE family. Homodimer. Interacts with SufS.

Its subcellular location is the cytoplasm. It participates in cofactor biosynthesis; iron-sulfur cluster biosynthesis. In terms of biological role, participates in cysteine desulfuration mediated by SufS. Cysteine desulfuration mobilizes sulfur from L-cysteine to yield L-alanine and constitutes an essential step in sulfur metabolism for biosynthesis of a variety of sulfur-containing biomolecules. Functions as a sulfur acceptor for SufS, by mediating the direct transfer of the sulfur atom from the S-sulfanylcysteine of SufS, an intermediate product of cysteine desulfuration process. The protein is Cysteine desulfuration protein SufE of Klebsiella pneumoniae (strain 342).